The primary structure comprises 316 residues: Probable metal transport system membrane protein TC_0342 (316 aa).

Transmembrane regions (helical) follow at residues 1 to 21 (MFAS…IVFF), 39 to 59 (IQVI…TFLV), 64 to 84 (AMYA…ACLF), 94 to 114 (QNLT…IHFI), 124 to 144 (ASTA…LVFL), 171 to 191 (FLVL…FICV), 196 to 216 (VFAF…MFLL), 226 to 246 (AVGV…AKLI), 252 to 272 (EMMG…PALS), and 286 to 306 (SGLA…TVFV).

This sequence belongs to the ABC-3 integral membrane protein family.

The protein localises to the cell inner membrane. Its function is as follows. Part of an ATP-driven transport system TC_0338/TC_0339/TC_0341/TC_0342 for a metal. This is Probable metal transport system membrane protein TC_0342 from Chlamydia muridarum (strain MoPn / Nigg).